Reading from the N-terminus, the 139-residue chain is FAD synthase (139 aa).

Residues 9–10 (TF), 14–17 (HPGH), and N92 contribute to the ATP site.

The protein belongs to the archaeal FAD synthase family. As to quaternary structure, homodimer. Requires a divalent metal cation as cofactor.

The catalysed reaction is FMN + ATP + H(+) = FAD + diphosphate. It participates in cofactor biosynthesis; FAD biosynthesis; FAD from FMN: step 1/1. In terms of biological role, catalyzes the transfer of the AMP portion of ATP to flavin mononucleotide (FMN) to produce flavin adenine dinucleotide (FAD) coenzyme. The polypeptide is FAD synthase (Methanocella paludicola (strain DSM 17711 / JCM 13418 / NBRC 101707 / SANAE)).